Consider the following 250-residue polypeptide: MAITMREMLEAGVHFGHQTRFWNPKMAPFIFGHRNKIHIINLEKSLPMFQEAAKFASQVSARRGTVLMVGTKRQARETVALEAQRAGVPYVDQRWLGGMLTNFKTVKTSIKRLKDMKIQQEAGLDSLSKKEQLMFARELAKLERDIGGIQDMTVLPDAIFVIDVGFHKIAIAEAKKLGIPLIAVVDTNHSPEGIDYIIPGNDDSSKAVILYARGIADAIIEGRSNAVDDVVKAVVAESSDEFVEVNETAA.

This sequence belongs to the universal ribosomal protein uS2 family.

This is Small ribosomal subunit protein uS2 from Albidiferax ferrireducens (strain ATCC BAA-621 / DSM 15236 / T118) (Rhodoferax ferrireducens).